Here is a 60-residue protein sequence, read N- to C-terminus: Large ribosomal subunit protein uL30 (60 aa).

This sequence belongs to the universal ribosomal protein uL30 family. In terms of assembly, part of the 50S ribosomal subunit.

In Aromatoleum aromaticum (strain DSM 19018 / LMG 30748 / EbN1) (Azoarcus sp. (strain EbN1)), this protein is Large ribosomal subunit protein uL30.